The following is a 226-amino-acid chain: Cytidylate kinase (226 aa).

Position 10-18 (10-18 (GPASSGKST)) interacts with ATP.

This sequence belongs to the cytidylate kinase family. Type 1 subfamily.

It localises to the cytoplasm. It carries out the reaction CMP + ATP = CDP + ADP. The catalysed reaction is dCMP + ATP = dCDP + ADP. In Streptococcus thermophilus (strain ATCC BAA-491 / LMD-9), this protein is Cytidylate kinase.